Consider the following 373-residue polypeptide: Potential protein lysine methyltransferase SET6 (373 aa).

The SET domain occupies 12-338 (PFFQVRQTKW…KDEQICIDYS (327 aa)).

The protein belongs to the class V-like SAM-binding methyltransferase superfamily.

Functionally, involved in resistance to compounds that target ergosterol biosynthesis, including fenpropimorph, dyclonine, and alverine citrate. Since a deletion in the absence of these compounds does not have an effect on growth, is more likely to be involved in compound availability. The polypeptide is Potential protein lysine methyltransferase SET6 (SET6) (Saccharomyces cerevisiae (strain ATCC 204508 / S288c) (Baker's yeast)).